A 228-amino-acid chain; its full sequence is UPF0502 protein AZOSEA09860 (228 aa).

It belongs to the UPF0502 family.

In Aromatoleum aromaticum (strain DSM 19018 / LMG 30748 / EbN1) (Azoarcus sp. (strain EbN1)), this protein is UPF0502 protein AZOSEA09860.